A 141-amino-acid chain; its full sequence is Nucleoside diphosphate kinase (141 aa).

Lysine 11, phenylalanine 59, arginine 87, threonine 93, arginine 104, and asparagine 114 together coordinate ATP. The active-site Pros-phosphohistidine intermediate is the histidine 117.

It belongs to the NDK family. Homotetramer. Mg(2+) serves as cofactor.

The protein resides in the cytoplasm. It carries out the reaction a 2'-deoxyribonucleoside 5'-diphosphate + ATP = a 2'-deoxyribonucleoside 5'-triphosphate + ADP. The catalysed reaction is a ribonucleoside 5'-diphosphate + ATP = a ribonucleoside 5'-triphosphate + ADP. Major role in the synthesis of nucleoside triphosphates other than ATP. The ATP gamma phosphate is transferred to the NDP beta phosphate via a ping-pong mechanism, using a phosphorylated active-site intermediate. This chain is Nucleoside diphosphate kinase, found in Pseudomonas syringae pv. tomato (strain ATCC BAA-871 / DC3000).